The sequence spans 101 residues: Phosphoribosyl-AMP cyclohydrolase (101 aa).

Residue Asp-71 participates in Mg(2+) binding. Cys-72 contributes to the Zn(2+) binding site. Residues Asp-73 and Asp-75 each coordinate Mg(2+). 2 residues coordinate Zn(2+): Cys-88 and Cys-95.

The protein belongs to the PRA-CH family. As to quaternary structure, homodimer. Requires Mg(2+) as cofactor. Zn(2+) is required as a cofactor.

The protein localises to the cytoplasm. It catalyses the reaction 1-(5-phospho-beta-D-ribosyl)-5'-AMP + H2O = 1-(5-phospho-beta-D-ribosyl)-5-[(5-phospho-beta-D-ribosylamino)methylideneamino]imidazole-4-carboxamide. The protein operates within amino-acid biosynthesis; L-histidine biosynthesis; L-histidine from 5-phospho-alpha-D-ribose 1-diphosphate: step 3/9. Functionally, catalyzes the hydrolysis of the adenine ring of phosphoribosyl-AMP. The chain is Phosphoribosyl-AMP cyclohydrolase from Bacillus cereus (strain Q1).